We begin with the raw amino-acid sequence, 164 residues long: General odorant-binding protein 1 (164 aa).

A signal peptide spans Met1–Ala19. Disulfide bonds link Cys38-Cys73, Cys69-Cys127, and Cys116-Cys136.

The protein belongs to the PBP/GOBP family. As to expression, antenna.

Functionally, present in the aqueous fluid surrounding olfactory sensory dendrites and are thought to aid in the capture and transport of hydrophobic odorants into and through this fluid. This Heliothis virescens (Tobacco budworm moth) protein is General odorant-binding protein 1.